The following is a 634-amino-acid chain: Chaperone protein DnaK (634 aa).

Residue threonine 193 is modified to Phosphothreonine; by autocatalysis. Positions 597-634 (GNANNTSSTESTTTNNNNEEDSKVVDSDYQEIDKKDGK) are disordered. The span at 600-613 (NNTSSTESTTTNNN) shows a compositional bias: low complexity. The segment covering 616 to 634 (EDSKVVDSDYQEIDKKDGK) has biased composition (basic and acidic residues).

The protein belongs to the heat shock protein 70 family.

Functionally, acts as a chaperone. This chain is Chaperone protein DnaK, found in Ehrlichia canis (strain Jake).